The chain runs to 195 residues: MSVLVPMVVEQTSRGERAYDIYSRLLKDRVIFLVGQVEDHMANLAIAQMLFLESENPNKDINLYINSPGGAVTSAMAIYDTMQFVKPDVRTLCIGQAASAGALLLAGGAKGKRHCLPHSSVMIHQVLGGYQGQGTDIQIHAKQTQRVSDQLNQILAKHTGKDIERVEKDTNRDYFLTPEEAVEYGLIDSIFTERP.

Residue serine 99 is the Nucleophile of the active site. The active site involves histidine 124.

The protein belongs to the peptidase S14 family. In terms of assembly, fourteen ClpP subunits assemble into 2 heptameric rings which stack back to back to give a disk-like structure with a central cavity, resembling the structure of eukaryotic proteasomes.

It is found in the cytoplasm. It carries out the reaction Hydrolysis of proteins to small peptides in the presence of ATP and magnesium. alpha-casein is the usual test substrate. In the absence of ATP, only oligopeptides shorter than five residues are hydrolyzed (such as succinyl-Leu-Tyr-|-NHMec, and Leu-Tyr-Leu-|-Tyr-Trp, in which cleavage of the -Tyr-|-Leu- and -Tyr-|-Trp bonds also occurs).. In terms of biological role, cleaves peptides in various proteins in a process that requires ATP hydrolysis. Has a chymotrypsin-like activity. Plays a major role in the degradation of misfolded proteins. This chain is ATP-dependent Clp protease proteolytic subunit, found in Coxiella burnetii (strain CbuG_Q212) (Coxiella burnetii (strain Q212)).